Here is a 190-residue protein sequence, read N- to C-terminus: DNA dC-&gt;dU-editing enzyme APOBEC-3C (190 aa).

The region spanning Asp-29 to Leu-138 is the CMP/dCMP-type deaminase domain. The segment at Glu-40 to Tyr-86 is (Microbial infection) Required for interaction with human foamy virus protein Bet. His-66 is a Zn(2+) binding site. Catalysis depends on Glu-68, which acts as the Proton donor. Zn(2+) is bound by residues Cys-97 and Cys-100.

The protein belongs to the cytidine and deoxycytidylate deaminase family. Homodimer. Interacts with TRIB3. Interacts with AGO2. As to quaternary structure, (Microbial infection) Interacts with human foamy virus protein Bet; this interaction does not induce APOBEC3C degradation but prevents its dimerization and incorporation into the virion by binding of Bet close to or within the APOBEC3C dimerization site. In terms of assembly, (Microbial infection) Interacts with HIV-1 Vif. It depends on Zn(2+) as a cofactor. As to expression, expressed in spleen, testes, peripherical blood lymphocytes, heart, thymus, prostate and ovary.

The protein localises to the nucleus. The protein resides in the cytoplasm. It catalyses the reaction a 2'-deoxycytidine in single-stranded DNA + H2O + H(+) = a 2'-deoxyuridine in single-stranded DNA + NH4(+). Its activity is regulated as follows. (Microbial infection) Antiviral activity is neutralized by the HIV-1 virion infectivity factor (Vif), that prevents its incorporation into progeny HIV-1 virions by both inhibiting its translation and/or by inducing its ubiquitination and subsequent degradation by the 26S proteasome. Its function is as follows. DNA deaminase (cytidine deaminase) which acts as an inhibitor of retrovirus replication and retrotransposon mobility via deaminase-dependent and -independent mechanisms. After the penetration of retroviral nucleocapsids into target cells of infection and the initiation of reverse transcription, it can induce the conversion of cytosine to uracil in the minus-sense single-strand viral DNA, leading to G-to-A hypermutations in the subsequent plus-strand viral DNA. The resultant detrimental levels of mutations in the proviral genome, along with a deamination-independent mechanism that works prior to the proviral integration, together exert efficient antiretroviral effects in infected target cells. Selectively targets single-stranded DNA and does not deaminate double-stranded DNA or single- or double-stranded RNA. Exhibits antiviral activity against simian immunodeficiency virus (SIV), hepatitis B virus (HBV), herpes simplex virus 1 (HHV-1) and Epstein-Barr virus (EBV) and may inhibit the mobility of LTR and non-LTR retrotransposons. May also play a role in the epigenetic regulation of gene expression through the process of active DNA demethylation. The chain is DNA dC-&gt;dU-editing enzyme APOBEC-3C (APOBEC3C) from Homo sapiens (Human).